Consider the following 297-residue polypeptide: Cyclin-dependent kinase 1 (297 aa).

A Protein kinase domain is found at 4 to 293 (YQKVEKIGEG…AKRALQQNYL (290 aa)). ATP is bound by residues 10–18 (IGEGTYGVV) and Lys-33. Residue Thr-14 is modified to Phosphothreonine. Tyr-15 is subject to Phosphotyrosine. Asp-134 acts as the Proton acceptor in catalysis. Position 167 is a phosphothreonine (Thr-167).

This sequence belongs to the protein kinase superfamily. CMGC Ser/Thr protein kinase family. CDC2/CDKX subfamily. As to quaternary structure, forms a stable but non-covalent complex with regulatory subunit suc1 and with a cyclin. Interacts with cyclin cdc13. Interacts with cyclin cig2. Interacts with cdc37.

The protein resides in the cytoplasm. It carries out the reaction L-seryl-[protein] + ATP = O-phospho-L-seryl-[protein] + ADP + H(+). The catalysed reaction is L-threonyl-[protein] + ATP = O-phospho-L-threonyl-[protein] + ADP + H(+). With respect to regulation, phosphorylation at Thr-14 or Tyr-15 inactivates the enzyme, while phosphorylation at Thr-167 activates it. Cyclin-dependent kinase that acts as a master regulator of the mitotic and meiotic cell cycles. Required to drive the G1-S and G2-M transitions, and initiation of premeiotic DNA replication and meiosis II. More than 200 substrates have been identified. Substrate specificity is in part regulated by the bound cyclin protein. When complexed with cyclin cig2, it drives the G1-S phase transition. When complexed with cyclin cdc13, it drives the G2-M transition and initiation of meiosis II. Its activity rises throughout the cell cycle and substrate specificity is further influenced by activity thresholds with more sensitive substrates phosphorylated earlier in the cell cycle than less sensitive substrates. Phosphorylates dis1 during metaphase to ensure proper microtubule dynamics and accurate chromosome segregation. Phosphorylates the repetitive C-terminus of the large subunit of RNA polymerase II rpb1. Inactivated by checkpoint signaling following detection of cellular damage, leading to cell cycle arrest to allow damage repair. Inactivated during G2 DNA damage checkpoint signaling. Inactivated in response to defective RNA splicing. The chain is Cyclin-dependent kinase 1 from Schizosaccharomyces pombe (strain 972 / ATCC 24843) (Fission yeast).